The sequence spans 364 residues: Palmitoyltransferase ZDHHC9 (364 aa).

The Cytoplasmic portion of the chain corresponds to 1 to 35; that stretch reads MSVMVVRKKVTRKWEKLPGRNTFCCDGRVMMARQK. Residues 36–56 traverse the membrane as a helical segment; it reads GIFYLTLFLILGTCTLFFAFE. Over 57-63 the chain is Lumenal; that stretch reads CRYLAVQ. The helical transmembrane segment at 64-84 threads the bilayer; sequence LSPAIPVFAAMLFLFSMATLL. The Cytoplasmic segment spans residues 85–183; it reads RTSFSDPGVI…NCVGKRNYRY (99 aa). A DHHC domain is found at 139–189; that stretch reads KYCYTCKIFRPPRASHCSICDNCVERFDHHCPWVGNCVGKRNYRYFYLFIL. Residue cysteine 169 is the S-palmitoyl cysteine intermediate of the active site. A helical membrane pass occupies residues 184 to 204; the sequence is FYLFILSLSLLTIYVFAFNIV. The Lumenal segment spans residues 205–228; the sequence is YVALKSLKIGFLETLKETPGTVLE. The chain crosses the membrane as a helical span at residues 229–249; that stretch reads VLICFFTLWSVVGLTGFHTFL. At 250–364 the chain is on the cytoplasmic side; the sequence is VALNQTTNED…PPQEAAEAEK (115 aa). Residues 303–364 are disordered; that stretch reads PLEESGSRPP…PPQEAAEAEK (62 aa). The span at 310–323 shows a compositional bias: polar residues; it reads RPPSTQETSSSLLP. Pro residues predominate over residues 346 to 356; the sequence is EMPPPEPPEPP.

The protein belongs to the DHHC palmitoyltransferase family. ERF2/ZDHHC9 subfamily. As to quaternary structure, interacts with GOLGA7. Highly expressed in kidney, skeletal muscle, brain, lung and liver. Absent in thymus, spleen and leukocytes.

The protein resides in the endoplasmic reticulum membrane. It localises to the golgi apparatus membrane. It carries out the reaction L-cysteinyl-[protein] + hexadecanoyl-CoA = S-hexadecanoyl-L-cysteinyl-[protein] + CoA. In terms of biological role, palmitoyltransferase that catalyzes the addition of palmitate onto various protein substrates, such as ADRB2, GSDMD, HRAS, NRAS and CGAS. The ZDHHC9-GOLGA7 complex is a palmitoyltransferase specific for HRAS and NRAS. May have a palmitoyltransferase activity toward the beta-2 adrenergic receptor/ADRB2 and therefore regulate G protein-coupled receptor signaling. Acts as a regulator of innate immunity by catalyzing palmitoylation of CGAS, thereby promoting CGAS homodimerization and cyclic GMP-AMP synthase activity. Activates pyroptosis by catalyzing palmitoylation of gasdermin-D (GSDMD), thereby promoting membrane translocation and pore formation of GSDMD. Its function is as follows. (Microbial infection) Through a sequential action with ZDHHC20, rapidly and efficiently palmitoylates SARS coronavirus-2/SARS-CoV-2 spike protein following its synthesis in the endoplasmic reticulum (ER). In the infected cell, promotes spike biogenesis by protecting it from premature ER degradation, increases half-life and controls the lipid organization of its immediate membrane environment. Once the virus has formed, spike palmitoylation controls fusion with the target cell. This is Palmitoyltransferase ZDHHC9 from Homo sapiens (Human).